Reading from the N-terminus, the 479-residue chain is GTPase Der (479 aa).

EngA-type G domains are found at residues 3 to 167 (FTLA…EAAA) and 191 to 366 (LQIA…ATWN). Residues 9-16 (GRPNVGKS), 56-60 (DTAGL), 119-122 (NKAE), 197-204 (GRPNAGKS), 244-248 (DTAGM), and 309-312 (NKWD) each bind GTP. The KH-like domain occupies 367–453 (TRISTARLNQ…RLWMRSQADD (87 aa)). Residues 449–479 (SQADDNPYKNRKKSTPSRLNKHVRKGETKKG) are disordered. Over residues 457-472 (KNRKKSTPSRLNKHVR) the composition is skewed to basic residues.

It belongs to the TRAFAC class TrmE-Era-EngA-EngB-Septin-like GTPase superfamily. EngA (Der) GTPase family. As to quaternary structure, associates with the 50S ribosomal subunit.

GTPase that plays an essential role in the late steps of ribosome biogenesis. This chain is GTPase Der, found in Jannaschia sp. (strain CCS1).